The sequence spans 277 residues: MAVALILLLIAIGSVLFHLFSPWWWTPIATNWGYIDDTINITFWITGFVFTAVILFMAYCVFRFHHKEGRQAAYNPENKKLEWWLSVGTGVGVAAMLAPGLVVWHQFVTVPADATEVEIMGQQWQWSFRLPGKDGRLGTSDVRNISPENPMGLNRDDPHGQDDVVIENGDLHLPIGKPVKVLLRSVDVLHDFYVPEFRAKMDMVPGMVTYFWIRPIRTGTFDVLCAELCGAAHYQMRAKVIVEAESDYHAWLEQQKTFAGLSGRNAVVRAKYNSGDD.

At 1 to 40 (MAVALILLLIAIGSVLFHLFSPWWWTPIATNWGYIDDTIN) the chain is on the periplasmic side. Residues 41–61 (ITFWITGFVFTAVILFMAYCV) form a helical membrane-spanning segment. Residues 62–83 (FRFHHKEGRQAAYNPENKKLEW) are Cytoplasmic-facing. The helical transmembrane segment at 84 to 104 (WLSVGTGVGVAAMLAPGLVVW) threads the bilayer. The Periplasmic portion of the chain corresponds to 105 to 277 (HQFVTVPADA…VRAKYNSGDD (173 aa)). Histidine 190, cysteine 225, cysteine 229, and histidine 233 together coordinate Cu cation.

This sequence belongs to the cytochrome c oxidase subunit 2 family.

It is found in the cell membrane. The enzyme catalyses 4 Fe(II)-[cytochrome c] + O2 + 8 H(+)(in) = 4 Fe(III)-[cytochrome c] + 2 H2O + 4 H(+)(out). Cytochrome c oxidase is the component of the respiratory chain that catalyzes the reduction of oxygen to water. Subunits 1-3 form the functional core of the enzyme complex. Subunit 2 transfers the electrons from cytochrome c via its binuclear copper A center to the bimetallic center of the catalytic subunit 1. This chain is Alternative cytochrome c oxidase subunit 2 (coxM), found in Bradyrhizobium diazoefficiens (strain JCM 10833 / BCRC 13528 / IAM 13628 / NBRC 14792 / USDA 110).